Here is a 413-residue protein sequence, read N- to C-terminus: Lipoyl synthase, mitochondrial (413 aa).

Residues 1 to 33 (MAAATNRFRALYSSSRVATPQAGSASYLSYRGY) constitute a mitochondrion transit peptide. The [4Fe-4S] cluster site is built by Cys133, Cys138, Cys144, Cys164, Cys168, Cys171, and Ser379. The region spanning 147–368 (GGDKAAATAT…RQRALDMGFL (222 aa)) is the Radical SAM core domain.

Belongs to the radical SAM superfamily. Lipoyl synthase family. [4Fe-4S] cluster is required as a cofactor.

It localises to the mitochondrion. The catalysed reaction is [[Fe-S] cluster scaffold protein carrying a second [4Fe-4S](2+) cluster] + N(6)-octanoyl-L-lysyl-[protein] + 2 oxidized [2Fe-2S]-[ferredoxin] + 2 S-adenosyl-L-methionine + 4 H(+) = [[Fe-S] cluster scaffold protein] + N(6)-[(R)-dihydrolipoyl]-L-lysyl-[protein] + 4 Fe(3+) + 2 hydrogen sulfide + 2 5'-deoxyadenosine + 2 L-methionine + 2 reduced [2Fe-2S]-[ferredoxin]. It functions in the pathway protein modification; protein lipoylation via endogenous pathway; protein N(6)-(lipoyl)lysine from octanoyl-[acyl-carrier-protein]: step 2/2. Its function is as follows. Catalyzes the radical-mediated insertion of two sulfur atoms into the C-6 and C-8 positions of the octanoyl moiety bound to the lipoyl domains of lipoate-dependent enzymes, thereby converting the octanoylated domains into lipoylated derivatives. In Emericella nidulans (strain FGSC A4 / ATCC 38163 / CBS 112.46 / NRRL 194 / M139) (Aspergillus nidulans), this protein is Lipoyl synthase, mitochondrial.